The primary structure comprises 123 residues: Large ribosomal subunit protein uL29 (123 aa).

The protein belongs to the universal ribosomal protein uL29 family.

The polypeptide is Large ribosomal subunit protein uL29 (RPL35) (Theileria lestoquardi).